A 291-amino-acid chain; its full sequence is Ribosomal RNA small subunit methyltransferase A (291 aa).

Residues Asn-27, Leu-29, Gly-54, Glu-75, Asp-100, and Asn-125 each coordinate S-adenosyl-L-methionine.

Belongs to the class I-like SAM-binding methyltransferase superfamily. rRNA adenine N(6)-methyltransferase family. RsmA subfamily.

It is found in the cytoplasm. It catalyses the reaction adenosine(1518)/adenosine(1519) in 16S rRNA + 4 S-adenosyl-L-methionine = N(6)-dimethyladenosine(1518)/N(6)-dimethyladenosine(1519) in 16S rRNA + 4 S-adenosyl-L-homocysteine + 4 H(+). Functionally, specifically dimethylates two adjacent adenosines (A1518 and A1519) in the loop of a conserved hairpin near the 3'-end of 16S rRNA in the 30S particle. May play a critical role in biogenesis of 30S subunits. In Streptococcus mutans serotype c (strain ATCC 700610 / UA159), this protein is Ribosomal RNA small subunit methyltransferase A.